Consider the following 433-residue polypeptide: E3 ubiquitin-protein ligase RNF26 (433 aa).

5 consecutive transmembrane segments (helical) span residues 24–44, 60–80, 147–169, 183–203, and 220–240; these read LNFL…AFVY, GVLL…CGGL, VINS…VLAL, VVAA…ILLW, and LASF…VLAV. The segment at 380–422 adopts an RING-type zinc-finger fold; it reads CVICQDQSKTVLLLPCRHLCLCQACTEILMRHPVYHRNCPLCR.

In terms of assembly, interacts with INCA1. Interacts with TMEM43, ENDOD1, TMEM33 and TMED1 to form a complex capable of modulating innate immune signaling through the cGAS-STING pathway. Interacts with UBE2J1; this interaction is important for SQSTM1 ubiquitination. As to expression, ubiquitous. Up-regulated in several cancer cell lines.

The protein localises to the endoplasmic reticulum membrane. The catalysed reaction is S-ubiquitinyl-[E2 ubiquitin-conjugating enzyme]-L-cysteine + [acceptor protein]-L-lysine = [E2 ubiquitin-conjugating enzyme]-L-cysteine + N(6)-ubiquitinyl-[acceptor protein]-L-lysine.. Its pathway is protein modification; protein ubiquitination. Its function is as follows. E3 ubiquitin-protein ligase that plays a key role in endosome organization by retaining vesicles in the perinuclear cloud. Acts as a platform for perinuclear positioning of the endosomal system by mediating ubiquitination of SQSTM1 through interaction with the ubiquitin conjugating enzyme UBE2J1. Ubiquitinated SQSTM1 attracts specific vesicle-associated adapters, forming a molecular bridge that restrains cognate vesicles in the perinuclear region and organizes the endosomal pathway for efficient cargo transport. Also acts as a regulator of type I interferon production in response to viral infection by mediating the formation of 'Lys-11'-linked polyubiquitin chains on TMEM173/STING, leading to stabilize TMEM173/STING. Also required to limit type I interferon response by promoting autophagic degradation of IRF3. This Homo sapiens (Human) protein is E3 ubiquitin-protein ligase RNF26.